Consider the following 750-residue polypeptide: MIIRSPEPEVKILVDRDHIKTSFEEWARPGHFSRTLAKGPDTTTWIWNLHADAHDFDSHTSDLEEISRKVFSAHFGQLSIIFLWLSGMYFHGARFSNYEAWLSDPTHIGPSAQVVWPIVGQEILNGDVGGGFRGIQITSGFFQLWRASGITSELQLYCTAIGALIFAALMLFAGWFHYHKAAPKLAWFQDVESMLNHHLAGLLGLGSLSWAGHQVHVSLPINQFLNAGVDPKEIPLPHEFILNRDLLAQLYPSFAEGATPFFTLDWSKYSDFLTFRGGLDPVTGGLWLTDIAHHHLAIAILFLIAGHMYKTNWGIGHGLKDILEAHKGPFTGQGHKGLYEILTTSWHAQLSLNLAMLGSLTIIVAHHMYSMPPYPYLATDYGTQLSLFTHHMWIGGFLIVGAAAHAAIFMVRDYDPTTRYNDLLDRVLRHRDAIISHLNWACIFLGFHSFGLYIHNDTMSALGRPQDMFSDTAIQLQPVFAQWIQNTHALAPSATAPGATTSTSLTWGGGDLVAVGGKVALLPIPLGTADFLVHHIHAFTIHVTVLILLKGVLFARSSRLIPDKANLGFRFPCDGPGRGGTCQVSAWDHVFLGLFWMYNAISVVIFHFSWKMQSDVWGSISDQGVVTHITGGNFAQSSITINGWLRDFLWAQASQVIQSYGSSLSAYGLFFLGAHFVWAFSLMFLFSGRGYWQELIESIVWAHNKLKVAPATQPRALSIVQGRAVGVTHYLLGGIATTWAFFLARIIAVG.

8 helical membrane-spanning segments follow: residues 70 to 93 (VFSAHFGQLSIIFLWLSGMYFHGA), 156 to 179 (LYCTAIGALIFAALMLFAGWFHYH), 195 to 219 (LNHHLAGLLGLGSLSWAGHQVHVSL), 291 to 309 (IAHHHLAIAILFLIAGHMY), 346 to 369 (WHAQLSLNLAMLGSLTIIVAHHMY), 385 to 411 (LSLFTHHMWIGGFLIVGAAAHAAIFMV), 433 to 455 (AIISHLNWACIFLGFHSFGLYIH), and 531 to 549 (FLVHHIHAFTIHVTVLILL). The [4Fe-4S] cluster site is built by Cys-573 and Cys-582. Helical transmembrane passes span 589–610 (HVFLGLFWMYNAISVVIFHFSW) and 664–686 (LSAYGLFFLGAHFVWAFSLMFLF). Chlorophyll a' is bound at residue His-675. Residues Met-683 and Tyr-691 each contribute to the chlorophyll a site. Trp-692 is a binding site for phylloquinone. A helical transmembrane segment spans residues 724–744 (AVGVTHYLLGGIATTWAFFLA).

Belongs to the PsaA/PsaB family. The PsaA/B heterodimer binds the P700 chlorophyll special pair and subsequent electron acceptors. PSI consists of a core antenna complex that captures photons, and an electron transfer chain that converts photonic excitation into a charge separation. The eukaryotic PSI reaction center is composed of at least 11 subunits. It depends on P700 is a chlorophyll a/chlorophyll a' dimer, A0 is one or more chlorophyll a, A1 is one or both phylloquinones and FX is a shared 4Fe-4S iron-sulfur center. as a cofactor.

The protein resides in the plastid. The protein localises to the chloroplast thylakoid membrane. The enzyme catalyses reduced [plastocyanin] + hnu + oxidized [2Fe-2S]-[ferredoxin] = oxidized [plastocyanin] + reduced [2Fe-2S]-[ferredoxin]. PsaA and PsaB bind P700, the primary electron donor of photosystem I (PSI), as well as the electron acceptors A0, A1 and FX. PSI is a plastocyanin-ferredoxin oxidoreductase, converting photonic excitation into a charge separation, which transfers an electron from the donor P700 chlorophyll pair to the spectroscopically characterized acceptors A0, A1, FX, FA and FB in turn. Oxidized P700 is reduced on the lumenal side of the thylakoid membrane by plastocyanin. In Daucus carota (Wild carrot), this protein is Photosystem I P700 chlorophyll a apoprotein A1.